Consider the following 335-residue polypeptide: Beta-hexosaminidase (335 aa).

Residues Asp60, Arg68, Arg133, and 163–164 (KH) each bind substrate. The Proton donor/acceptor role is filled by His176. Catalysis depends on Asp247, which acts as the Nucleophile.

Belongs to the glycosyl hydrolase 3 family. NagZ subfamily.

It localises to the cytoplasm. It catalyses the reaction Hydrolysis of terminal non-reducing N-acetyl-D-hexosamine residues in N-acetyl-beta-D-hexosaminides.. The protein operates within cell wall biogenesis; peptidoglycan recycling. In terms of biological role, plays a role in peptidoglycan recycling by cleaving the terminal beta-1,4-linked N-acetylglucosamine (GlcNAc) from peptide-linked peptidoglycan fragments, giving rise to free GlcNAc, anhydro-N-acetylmuramic acid and anhydro-N-acetylmuramic acid-linked peptides. The protein is Beta-hexosaminidase of Stenotrophomonas maltophilia (strain R551-3).